The chain runs to 705 residues: Frizzled-4 (705 aa).

Positions 1–22 (MKPTCILCLLVVILLHPRISKS) are cleaved as a signal peptide. Residues 21–37 (KSSTSGNPSASSSSSSP) show a composition bias toward low complexity. Residues 21–40 (KSSTSGNPSASSSSSSPPEI) are disordered. The Extracellular segment spans residues 23–233 (STSGNPSASS…FTPAEKHLAE (211 aa)). The FZ domain occupies 41–163 (PAFRQCETIR…NNHETMCMEG (123 aa)). Disulfide bonds link cysteine 46–cysteine 107, cysteine 54–cysteine 100, cysteine 91–cysteine 130, cysteine 119–cysteine 160, and cysteine 123–cysteine 147. A glycan (N-linked (GlcNAc...) asparagine) is linked at asparagine 60. The helical transmembrane segment at 234–254 (IWVSTWAYAALGLALVATVCL) threads the bilayer. At 255 to 270 (LASDGSRLASAKWSRL) the chain is on the cytoplasmic side. Residues 271-291 (LSPLIWCHNMVTLGWAVRFMV) form a helical membrane-spanning segment. The Extracellular segment spans residues 292 to 322 (GRTGTACGTDPQAPNESLLTVDGLSNASCAS). 2 N-linked (GlcNAc...) asparagine glycosylation sites follow: asparagine 306 and asparagine 317. The helical transmembrane segment at 323–343 (VFLMRYYFGMAACAWWAVLCL) threads the bilayer. Over 344 to 386 (GWHRDIRRHSPDSKGHVVIPSNFGGSPAKRNSAKTAQQDLTQN) the chain is Cytoplasmic. Residues 387-407 (NFVCFVAWGLPAFQTSAVIVA) form a helical membrane-spanning segment. Residues 408-430 (RFVDADELLGACFVGNQSDKALQ) lie on the Extracellular side of the membrane. Residue asparagine 423 is glycosylated (N-linked (GlcNAc...) asparagine). A helical membrane pass occupies residues 431-451 (ILVATPVFCYWIFGSMNLISG). Over 452–483 (YLVHCRTKEILRNSNALSVQQQLQQLSAHSSS) the chain is Cytoplasmic. The chain crosses the membrane as a helical span at residues 484–504 (GIGIFLFIYGLACAMLLLAVI). Residues 505 to 529 (YEFANIDVWLGSGDTNTPLWPFLLR) lie on the Extracellular side of the membrane. Residues 530–550 (AFMELMLGICCFAWVLGPSIS) form a helical membrane-spanning segment. Residues 551–705 (TLYKRQVSNG…LQQYGNETLL (155 aa)) are Cytoplasmic-facing. Residues 635–681 (RSVHHQQRHSPHHHHHQQQQHHQFHPHHNHQHHSTSSHRLYYPPGSY) form a disordered region. Residues 636–670 (SVHHQQRHSPHHHHHQQQQHHQFHPHHNHQHHSTS) show a composition bias toward basic residues. Positions 703–705 (TLL) match the PDZ-binding motif.

This sequence belongs to the G-protein coupled receptor Fz/Smo family.

The protein resides in the membrane. Receptor for Wnt proteins. Most of frizzled receptors are coupled to the beta-catenin canonical signaling pathway, which leads to the activation of disheveled proteins, inhibition of GSK-3 kinase, nuclear accumulation of beta-catenin and activation of Wnt target genes. A second signaling pathway involving PKC and calcium fluxes has been seen for some family members, but it is not yet clear if it represents a distinct pathway or if it can be integrated in the canonical pathway, as PKC seems to be required for Wnt-mediated inactivation of GSK-3 kinase. Both pathways seem to involve interactions with G-proteins. May be involved in transduction and intercellular transmission of polarity information during tissue morphogenesis and/or in differentiated tissues. Required to coordinate the cytoskeletons of epidermal cells to produce a parallel array of cuticular hairs and bristles. This Drosophila melanogaster (Fruit fly) protein is Frizzled-4 (fz4).